We begin with the raw amino-acid sequence, 309 residues long: Ferrochelatase (309 aa).

Residues His-185 and Glu-262 each coordinate Fe cation.

Belongs to the ferrochelatase family.

The protein resides in the cytoplasm. It carries out the reaction heme b + 2 H(+) = protoporphyrin IX + Fe(2+). It functions in the pathway porphyrin-containing compound metabolism; protoheme biosynthesis; protoheme from protoporphyrin-IX: step 1/1. Functionally, catalyzes the ferrous insertion into protoporphyrin IX. The chain is Ferrochelatase from Campylobacter jejuni subsp. jejuni serotype O:6 (strain 81116 / NCTC 11828).